A 51-amino-acid chain; its full sequence is Large ribosomal subunit protein bL33 (51 aa).

Residues 1 to 21 (MRDKIKLESGAGTGHFYTTTK) are disordered.

It belongs to the bacterial ribosomal protein bL33 family.

In Neisseria gonorrhoeae (strain ATCC 700825 / FA 1090), this protein is Large ribosomal subunit protein bL33.